Reading from the N-terminus, the 274-residue chain is N-acetylmuramic acid 6-phosphate etherase (274 aa).

In terms of domain architecture, SIS spans 54-217 (IIPRIDSGGR…STSVMIKLGR (164 aa)). Glu82 functions as the Proton donor in the catalytic mechanism. Glu113 is a catalytic residue.

Belongs to the GCKR-like family. MurNAc-6-P etherase subfamily. As to quaternary structure, homodimer.

The enzyme catalyses N-acetyl-D-muramate 6-phosphate + H2O = N-acetyl-D-glucosamine 6-phosphate + (R)-lactate. Its pathway is amino-sugar metabolism; N-acetylmuramate degradation. Functionally, specifically catalyzes the cleavage of the D-lactyl ether substituent of MurNAc 6-phosphate, producing GlcNAc 6-phosphate and D-lactate. This Christiangramia forsetii (strain DSM 17595 / CGMCC 1.15422 / KT0803) (Gramella forsetii) protein is N-acetylmuramic acid 6-phosphate etherase.